The sequence spans 712 residues: Secretin OutD (712 aa).

Positions 1–27 (MLGKGIKKSWGWLGLTVLLLGSPCGWA) are cleaved as a signal peptide. Positions 28–124 (AEFSASFKGT…LANNEQPGVG (97 aa)) are N0. Positions 126–190 (ELVTRVVPLN…DIVNTVDKTG (65 aa)) are N1. The interval 191–264 (DREMITVSLN…MIRQLDRKQV (74 aa)) is N2. Positions 267–394 (GGTKVIYLKY…DLEQVINQLD (128 aa)) are N3. The tract at residues 288–342 (GNGTSGNRNSSSTNSSRPSSTRSSSTLNNSNSSSSGSSSGSGSSSSSSSSSMGFG) is disordered. The secretin stretch occupies residues 399–651 (QVLVEAIIAE…LFLRPTIIRD (253 aa)). Residues 653 to 712 (QQYQQASISKYNSFNNEQQQQRGQGNSVLDNNTLRLSGGNTYTFRQVQSSISAFYQPEGR) form a s domain region.

Belongs to the bacterial secretin family. GSP D subfamily. In terms of assembly, forms a cylindrical channel with 15 subunits.

It localises to the cell outer membrane. In terms of biological role, involved in a type II secretion system (T2SS, formerly general secretion pathway, GSP) for the export of proteins. Required for the translocation of the multiple pectic enzymes. This subunit forms the outer membrane channel. The protein is Secretin OutD (outD) of Dickeya chrysanthemi (Pectobacterium chrysanthemi).